A 253-amino-acid polypeptide reads, in one-letter code: Transmembrane protein 51 (253 aa).

Helical transmembrane passes span 17-37 (IGLGMLVLGVIMAMWNLVPGF) and 65-85 (VAYVLVGAGVMLLLLSICLSI). Disordered regions lie at residues 93 to 133 (QGED…YVPS) and 164 to 253 (LTGL…RPPD). Residues 113-124 (EDSQEEEEEDEE) show a composition bias toward acidic residues. Position 115 is a phosphoserine (S115). Over residues 164 to 176 (LTGLDETTPTSTR) the composition is skewed to polar residues. Phosphoserine occurs at positions 182 and 192. Positions 194–205 (LAKRLKPLKVRR) are enriched in basic residues. The span at 206 to 217 (IKSEKLHLKDFR) shows a compositional bias: basic and acidic residues. Residues 224 to 238 (NVPPPSIEPLTPPPQ) are compositionally biased toward pro residues. Residues 242–253 (VQEKAPDTRPPD) show a composition bias toward basic and acidic residues.

The protein resides in the membrane. This chain is Transmembrane protein 51 (TMEM51), found in Homo sapiens (Human).